The sequence spans 145 residues: 3-hydroxyacyl-[acyl-carrier-protein] dehydratase FabZ (145 aa).

His-48 is an active-site residue.

The protein belongs to the thioester dehydratase family. FabZ subfamily.

The protein localises to the cytoplasm. The catalysed reaction is a (3R)-hydroxyacyl-[ACP] = a (2E)-enoyl-[ACP] + H2O. Functionally, involved in unsaturated fatty acids biosynthesis. Catalyzes the dehydration of short chain beta-hydroxyacyl-ACPs and long chain saturated and unsaturated beta-hydroxyacyl-ACPs. The protein is 3-hydroxyacyl-[acyl-carrier-protein] dehydratase FabZ of Campylobacter hominis (strain ATCC BAA-381 / DSM 21671 / CCUG 45161 / LMG 19568 / NCTC 13146 / CH001A).